Here is a 216-residue protein sequence, read N- to C-terminus: Probable nicotinate-nucleotide adenylyltransferase (216 aa).

Belongs to the NadD family.

It carries out the reaction nicotinate beta-D-ribonucleotide + ATP + H(+) = deamido-NAD(+) + diphosphate. It functions in the pathway cofactor biosynthesis; NAD(+) biosynthesis; deamido-NAD(+) from nicotinate D-ribonucleotide: step 1/1. Functionally, catalyzes the reversible adenylation of nicotinate mononucleotide (NaMN) to nicotinic acid adenine dinucleotide (NaAD). The chain is Probable nicotinate-nucleotide adenylyltransferase from Shewanella pealeana (strain ATCC 700345 / ANG-SQ1).